A 277-amino-acid chain; its full sequence is 3-methyl-2-oxobutanoate hydroxymethyltransferase (277 aa).

Mg(2+) contacts are provided by Asp42 and Asp81. Residues 42–43 (DS), Asp81, and Lys110 each bind 3-methyl-2-oxobutanoate. A Mg(2+)-binding site is contributed by Glu112. Catalysis depends on Glu179, which acts as the Proton acceptor.

The protein belongs to the PanB family. Homodecamer; pentamer of dimers. The cofactor is Mg(2+).

It is found in the cytoplasm. The enzyme catalyses 3-methyl-2-oxobutanoate + (6R)-5,10-methylene-5,6,7,8-tetrahydrofolate + H2O = 2-dehydropantoate + (6S)-5,6,7,8-tetrahydrofolate. The protein operates within cofactor biosynthesis; (R)-pantothenate biosynthesis; (R)-pantoate from 3-methyl-2-oxobutanoate: step 1/2. Functionally, catalyzes the reversible reaction in which hydroxymethyl group from 5,10-methylenetetrahydrofolate is transferred onto alpha-ketoisovalerate to form ketopantoate. This chain is 3-methyl-2-oxobutanoate hydroxymethyltransferase, found in Anaplasma marginale (strain Florida).